A 26-amino-acid chain; its full sequence is Ribulose bisphosphate carboxylase large chain (26 aa).

Residues 1–2 (MS) constitute a propeptide that is removed on maturation. An N-acetylproline modification is found at Pro-3.

This sequence belongs to the RuBisCO large chain family. Type I subfamily. Heterohexadecamer of 8 large chains and 8 small chains.

It is found in the plastid. The protein resides in the chloroplast. It carries out the reaction 2 (2R)-3-phosphoglycerate + 2 H(+) = D-ribulose 1,5-bisphosphate + CO2 + H2O. The enzyme catalyses D-ribulose 1,5-bisphosphate + O2 = 2-phosphoglycolate + (2R)-3-phosphoglycerate + 2 H(+). Its function is as follows. RuBisCO catalyzes two reactions: the carboxylation of D-ribulose 1,5-bisphosphate, the primary event in carbon dioxide fixation, as well as the oxidative fragmentation of the pentose substrate in the photorespiration process. Both reactions occur simultaneously and in competition at the same active site. This is Ribulose bisphosphate carboxylase large chain (rbcL) from Vicia faba (Broad bean).